The primary structure comprises 209 residues: Uracil phosphoribosyltransferase (209 aa).

Residues R79, R104, and 131 to 139 (DPMLATGGS) contribute to the 5-phospho-alpha-D-ribose 1-diphosphate site. Uracil contacts are provided by residues I194 and 199 to 201 (GDA). D200 serves as a coordination point for 5-phospho-alpha-D-ribose 1-diphosphate.

It belongs to the UPRTase family. It depends on Mg(2+) as a cofactor.

The catalysed reaction is UMP + diphosphate = 5-phospho-alpha-D-ribose 1-diphosphate + uracil. It functions in the pathway pyrimidine metabolism; UMP biosynthesis via salvage pathway; UMP from uracil: step 1/1. Its activity is regulated as follows. Allosterically activated by GTP. Functionally, catalyzes the conversion of uracil and 5-phospho-alpha-D-ribose 1-diphosphate (PRPP) to UMP and diphosphate. The sequence is that of Uracil phosphoribosyltransferase from Alkaliphilus metalliredigens (strain QYMF).